Here is a 944-residue protein sequence, read N- to C-terminus: Valine--tRNA ligase (944 aa).

The short motif at 43-53 (PNVTGTLHMGH) is the 'HIGH' region element. The 'KMSKS' region motif lies at 550-554 (KMSKS). Lys553 is an ATP binding site. The stretch at 878 to 942 (LVDMDAERTR…QLTGLREQRA (65 aa)) forms a coiled coil.

This sequence belongs to the class-I aminoacyl-tRNA synthetase family. ValS type 1 subfamily. In terms of assembly, monomer.

The protein resides in the cytoplasm. The catalysed reaction is tRNA(Val) + L-valine + ATP = L-valyl-tRNA(Val) + AMP + diphosphate. Catalyzes the attachment of valine to tRNA(Val). As ValRS can inadvertently accommodate and process structurally similar amino acids such as threonine, to avoid such errors, it has a 'posttransfer' editing activity that hydrolyzes mischarged Thr-tRNA(Val) in a tRNA-dependent manner. This chain is Valine--tRNA ligase, found in Xanthomonas axonopodis pv. citri (strain 306).